Reading from the N-terminus, the 119-residue chain is Ribonuclease P protein component (119 aa).

This sequence belongs to the RnpA family. In terms of assembly, consists of a catalytic RNA component (M1 or rnpB) and a protein subunit.

The enzyme catalyses Endonucleolytic cleavage of RNA, removing 5'-extranucleotides from tRNA precursor.. In terms of biological role, RNaseP catalyzes the removal of the 5'-leader sequence from pre-tRNA to produce the mature 5'-terminus. It can also cleave other RNA substrates such as 4.5S RNA. The protein component plays an auxiliary but essential role in vivo by binding to the 5'-leader sequence and broadening the substrate specificity of the ribozyme. The sequence is that of Ribonuclease P protein component from Coprothermobacter proteolyticus (strain ATCC 35245 / DSM 5265 / OCM 4 / BT).